A 283-amino-acid polypeptide reads, in one-letter code: Gap junction beta-1 protein (283 aa).

Residues 1–22 (MNWTGLYTLLSGVNRHSTAIGR) are Cytoplasmic-facing. A helical transmembrane segment spans residues 23-45 (VWLSVIFIFRIMVLVVAAESVWG). Topologically, residues 46 to 75 (DEKSSFICNTLQPGCNSVCYDQFFPISHVR) are extracellular. A helical membrane pass occupies residues 76 to 95 (LWSLQLILVSTPALLVAMHV). The Cytoplasmic portion of the chain corresponds to 96–130 (AHQQHIEKKMLRLEGHGDPLHLEEVKRHKVHISGT). A helical transmembrane segment spans residues 131-153 (LWWTYVISVVFRLLFEAVFMYVF). The Extracellular portion of the chain corresponds to 154-191 (YLLYPGYAMVRLVKCDVYPCPNTVDCFVSRPTEKTVFT). The helical transmembrane segment at 192–214 (VFMLAASGICIILNVAEVVYLII) threads the bilayer. The Cytoplasmic segment spans residues 215 to 283 (RACARRAQRR…AEKSDRCSAC (69 aa)). Ser233, Ser258, Ser266, and Ser277 each carry phosphoserine.

The protein belongs to the connexin family. Beta-type (group I) subfamily. As to quaternary structure, a connexon is composed of a hexamer of connexins. Interacts with CNST.

It localises to the cell membrane. It is found in the cell junction. The protein resides in the gap junction. In terms of biological role, one gap junction consists of a cluster of closely packed pairs of transmembrane channels, the connexons, through which materials of low MW diffuse from one cell to a neighboring cell. This Homo sapiens (Human) protein is Gap junction beta-1 protein (GJB1).